A 530-amino-acid chain; its full sequence is MFS transporter PfmaC (530 aa).

The tract at residues 41 to 76 is disordered; the sequence is TTAVSDGDNQSSTMSGKTAAGDATSPASGSGSGGWF. The span at 42–56 shows a compositional bias: polar residues; it reads TAVSDGDNQSSTMSG. The span at 59 to 69 shows a compositional bias: low complexity; sequence AAGDATSPASG. Transmembrane regions (helical) follow at residues 165–182, 195–215, 226–246, 261–281, 324–344, 369–389, 396–416, 422–442, 456–476, and 493–513; these read YWLP…LGMY, FFIG…LGCW, ALFV…QAAL, WLFI…LFCF, IFTS…SLTV, NIPT…GFVS, GPVC…FTAW, LLMA…LLAG, AFIL…FQQL, and PSAL…IPLL.

This sequence belongs to the major facilitator superfamily. Allantoate permease family.

The protein resides in the cell membrane. In terms of biological role, MFS transporter; part of the gene cluster that mediates the biosynthesis of dihydroxynaphthalene (DHN)-melanin, a bluish-green pigment forming a dark layer in the conidial wall that protects the conidia from UV radiations. The polypeptide is MFS transporter PfmaC (Pestalotiopsis fici (strain W106-1 / CGMCC3.15140)).